We begin with the raw amino-acid sequence, 513 residues long: RNA-splicing ligase RtcB homolog (513 aa).

Mn(2+) is bound by residues Asp127, Cys130, His235, His267, and His361. 234–238 (NHYAE) is a binding site for GMP. GMP contacts are provided by residues 361-362 (HN), 410-413 (GGTM), Ser417, 436-439 (HGAG), and Lys512. Catalysis depends on His436, which acts as the GMP-histidine intermediate.

It belongs to the RtcB family. As to quaternary structure, catalytic component of the tRNA-splicing ligase complex. Mn(2+) is required as a cofactor.

It carries out the reaction a 3'-end 3'-phospho-ribonucleotide-RNA + a 5'-end dephospho-ribonucleoside-RNA + GTP = a ribonucleotidyl-ribonucleotide-RNA + GMP + diphosphate. The catalysed reaction is a 3'-end 2',3'-cyclophospho-ribonucleotide-RNA + a 5'-end dephospho-ribonucleoside-RNA + GTP + H2O = a ribonucleotidyl-ribonucleotide-RNA + GMP + diphosphate + H(+). Catalytic subunit of the tRNA-splicing ligase complex that acts by directly joining spliced tRNA halves to mature-sized tRNAs by incorporating the precursor-derived splice junction phosphate into the mature tRNA as a canonical 3',5'-phosphodiester. May act as an RNA ligase with broad substrate specificity, and may function toward other RNAs. The sequence is that of RNA-splicing ligase RtcB homolog from Micromonas commoda (strain RCC299 / NOUM17 / CCMP2709) (Picoplanktonic green alga).